Here is a 260-residue protein sequence, read N- to C-terminus: 5'-nucleotidase SurE (260 aa).

Positions 8, 9, 39, and 93 each coordinate a divalent metal cation.

This sequence belongs to the SurE nucleotidase family. A divalent metal cation serves as cofactor.

The protein localises to the cytoplasm. It carries out the reaction a ribonucleoside 5'-phosphate + H2O = a ribonucleoside + phosphate. Its function is as follows. Nucleotidase that shows phosphatase activity on nucleoside 5'-monophosphates. This Thermofilum pendens (strain DSM 2475 / Hrk 5) protein is 5'-nucleotidase SurE.